The sequence spans 155 residues: Aspartate carbamoyltransferase regulatory chain (155 aa).

Zn(2+) is bound by residues Cys113, Cys118, Cys139, and Cys142.

The protein belongs to the PyrI family. In terms of assembly, contains catalytic and regulatory chains. Zn(2+) serves as cofactor.

Its function is as follows. Involved in allosteric regulation of aspartate carbamoyltransferase. This Methanosphaerula palustris (strain ATCC BAA-1556 / DSM 19958 / E1-9c) protein is Aspartate carbamoyltransferase regulatory chain.